A 185-amino-acid chain; its full sequence is Probable RNA polymerase sigma-C factor (185 aa).

Positions 52–65 (DLTQETFLRAIGAI) match the Polymerase core binding motif. A DNA-binding region (H-T-H motif) is located at residues 149–168 (YADAAAVCGCPVGTIRSRVA).

It belongs to the sigma-70 factor family. ECF subfamily.

Its function is as follows. Sigma factors are initiation factors that promote the attachment of RNA polymerase to specific initiation sites and are then released. The polypeptide is Probable RNA polymerase sigma-C factor (sigC) (Mycobacterium bovis (strain ATCC BAA-935 / AF2122/97)).